The sequence spans 693 residues: Polyribonucleotide nucleotidyltransferase (693 aa).

2 residues coordinate Mg(2+): Asp485 and Asp491. The 60-residue stretch at 552-611 (PRIMVLEINPSKIGDLIGPSGKNIKKIIEETHTTINIKPEGLVYISAPDQESAEKAAQMV) folds into the KH domain. Positions 621–691 (GDIFLGKVIR…SSGRISLTRK (71 aa)) constitute an S1 motif domain.

Belongs to the polyribonucleotide nucleotidyltransferase family. It depends on Mg(2+) as a cofactor.

The protein localises to the cytoplasm. The enzyme catalyses RNA(n+1) + phosphate = RNA(n) + a ribonucleoside 5'-diphosphate. Functionally, involved in mRNA degradation. Catalyzes the phosphorolysis of single-stranded polyribonucleotides processively in the 3'- to 5'-direction. The chain is Polyribonucleotide nucleotidyltransferase from Dictyoglomus thermophilum (strain ATCC 35947 / DSM 3960 / H-6-12).